Here is a 404-residue protein sequence, read N- to C-terminus: Starvation-sensing protein RspA (404 aa).

The protein belongs to the mandelate racemase/muconate lactonizing enzyme family.

Its function is as follows. Probably involved in the degradation of homoserine lactone (HSL) or of a metabolite of HSL that signals starvation. This is Starvation-sensing protein RspA from Escherichia coli (strain K12).